Consider the following 559-residue polypeptide: MFTETYTLIERVLKACTDETEIALTDGGEHADLASTVAFALAKKRHQAPKVIAEELAVTLAANPELAGIRVEALGPYLNFSFGPKYLEETLKAAVQDNFGTAPTKPVRIVLEHTSANPNGPLHVGHIRNSILGDTLARAFRKAGYRVEVQYYVNDMGRQIAIVAYGFDHLDTGAKPGEKADHHIARVYVAANRDLEANPDKGAEIDERMQLIEKRDPATATQFRELVSRCLDGFKVTMQGLNVKHDRFIWESDFVKIGDMEKVLGRLAKIPQAVPPTEEDGTFSLDLSSCGYKKSYVLRRSDGTSVYAARDLAYHIWKGRNFDRVIDVLGADHKLITGQLVCTLRLIAEKPPEVVHFEFVSLPEGSMSTRAGTFVSADELIEEMQKRAIEEVQVRRPEIPVEERDAIAASVARAAIRYDIIKVSPEKSTVFDWKEALDFDRQSGPYVQYAHARACSILDRAGPFQERYDLLESPYEIALVKHIAKFPSIIESVVRDLRPHMLATYARDLADLFNTFYHYDPVLKGEGPVRESRLTLVLAAEKTLKEVLETLGIDALRSM.

Residues 116–126 (ANPNGPLHVGH) carry the 'HIGH' region motif.

It belongs to the class-I aminoacyl-tRNA synthetase family.

It is found in the cytoplasm. It catalyses the reaction tRNA(Arg) + L-arginine + ATP = L-arginyl-tRNA(Arg) + AMP + diphosphate. This is Arginine--tRNA ligase from Methanosphaerula palustris (strain ATCC BAA-1556 / DSM 19958 / E1-9c).